A 367-amino-acid polypeptide reads, in one-letter code: Peptide chain release factor 2 (367 aa).

The residue at position 254 (Gln254) is an N5-methylglutamine.

This sequence belongs to the prokaryotic/mitochondrial release factor family. In terms of processing, methylated by PrmC. Methylation increases the termination efficiency of RF2.

It is found in the cytoplasm. Its function is as follows. Peptide chain release factor 2 directs the termination of translation in response to the peptide chain termination codons UGA and UAA. The chain is Peptide chain release factor 2 from Burkholderia mallei (strain ATCC 23344).